The sequence spans 104 residues: Protein Rev (104 aa).

Ser5 is modified (phosphoserine; by host CK2). A homomultimerization region spans residues 18–26; sequence VIKILYQSN. Residues 25 to 34 show a composition bias toward polar residues; the sequence is SNPYPNSKGT. 2 disordered regions span residues 25 to 48 and 63 to 104; these read SNPY…WRAR and CLGG…ATTE. The Nuclear localization signal and RNA-binding (RRE) motif lies at 34-50; sequence TRQARRNRRRRWRARQR. A compositionally biased stretch (basic residues) spans 35–48; that stretch reads RQARRNRRRRWRAR. Pro residues predominate over residues 67–77; sequence PPEPVDLPLPP. Residues 73–84 carry the Nuclear export signal and binding to XPO1 motif; it reads LPLPPLDRLTLD. Residues 91–104 are compositionally biased toward polar residues; sequence TPGTESQQGTATTE.

This sequence belongs to the HIV-1 REV protein family. As to quaternary structure, homomultimer; when bound to the RRE. Multimeric assembly is essential for activity and may involve XPO1. Binds to human KPNB1, XPO1, TNPO1, RANBP5 and IPO7. Interacts with the viral Integrase. Interacts with human KHDRBS1. Interacts with human NAP1; this interaction decreases Rev multimerization and stimulates its activity. Interacts with human DEAD-box helicases DDX3 and DDX24; these interactions may serve for viral RNA export to the cytoplasm and packaging, respectively. Interacts with human PSIP1; this interaction may inhibit HIV-1 DNA integration by promoting dissociation of the Integrase-LEDGF/p75 complex. Asymmetrically arginine dimethylated at one site by host PRMT6. Methylation impairs the RNA-binding activity and export of viral RNA from the nucleus to the cytoplasm. In terms of processing, phosphorylated by protein kinase CK2. Presence of, and maybe binding to the N-terminus of the regulatory beta subunit of CK2 is necessary for CK2-mediated Rev's phosphorylation.

The protein resides in the host nucleus. The protein localises to the host nucleolus. It localises to the host cytoplasm. Functionally, escorts unspliced or incompletely spliced viral pre-mRNAs (late transcripts) out of the nucleus of infected cells. These pre-mRNAs carry a recognition sequence called Rev responsive element (RRE) located in the env gene, that is not present in fully spliced viral mRNAs (early transcripts). This function is essential since most viral proteins are translated from unspliced or partially spliced pre-mRNAs which cannot exit the nucleus by the pathway used by fully processed cellular mRNAs. Rev itself is translated from a fully spliced mRNA that readily exits the nucleus. Rev's nuclear localization signal (NLS) binds directly to KPNB1/Importin beta-1 without previous binding to KPNA1/Importin alpha-1. KPNB1 binds to the GDP bound form of RAN (Ran-GDP) and targets Rev to the nucleus. In the nucleus, the conversion from Ran-GDP to Ran-GTP dissociates Rev from KPNB1 and allows Rev's binding to the RRE in viral pre-mRNAs. Rev multimerization on the RRE via cooperative assembly exposes its nuclear export signal (NES) to the surface. Rev can then form a complex with XPO1/CRM1 and Ran-GTP, leading to nuclear export of the complex. Conversion from Ran-GTP to Ran-GDP mediates dissociation of the Rev/RRE/XPO1/RAN complex, so that Rev can return to the nucleus for a subsequent round of export. Beside KPNB1, also seems to interact with TNPO1/Transportin-1, RANBP5/IPO5 and IPO7/RANBP7 for nuclear import. The nucleoporin-like HRB/RIP is an essential cofactor that probably indirectly interacts with Rev to release HIV RNAs from the perinuclear region to the cytoplasm. The protein is Protein Rev of Human immunodeficiency virus type 1 group N (isolate YBF30) (HIV-1).